The sequence spans 142 residues: Transcriptional regulator MraZ (142 aa).

SpoVT-AbrB domains follow at residues 5-51 (ASSL…PRNE) and 77-120 (AMDV…DAAT).

This sequence belongs to the MraZ family. Forms oligomers.

It is found in the cytoplasm. It localises to the nucleoid. The sequence is that of Transcriptional regulator MraZ from Polaromonas sp. (strain JS666 / ATCC BAA-500).